The primary structure comprises 205 residues: Tumor suppressor candidate gene 1 protein homolog (205 aa).

The segment covering 1–12 has biased composition (low complexity); that stretch reads MWRMRGGATRRG. The segment at 1-49 is disordered; sequence MWRMRGGATRRGSCGGEGGGSRGESGRLGRAREGGGGGGGVGWRGRAGG. Residues 13-23 show a composition bias toward gly residues; the sequence is SCGGEGGGSRG. Basic and acidic residues predominate over residues 24–33; that stretch reads ESGRLGRARE. A compositionally biased stretch (gly residues) spans 34–48; the sequence is GGGGGGGVGWRGRAG. Residues 66–110 adopt a coiled-coil conformation; it reads LEALRARDERDRQNARLREENARLRLENRRLRRENRSLFRQALRL. 2 disordered regions span residues 113-149 and 174-205; these read DSGE…SPRA and GARP…RPWL. Position 146 is a phosphoserine (S146). Positions 196–205 are enriched in basic and acidic residues; the sequence is HDPDVPRPWL.

The sequence is that of Tumor suppressor candidate gene 1 protein homolog (Tusc1) from Mus musculus (Mouse).